A 145-amino-acid polypeptide reads, in one-letter code: D-aminoacyl-tRNA deacylase (145 aa).

A Gly-cisPro motif, important for rejection of L-amino acids motif is present at residues 137–138; the sequence is GP.

Belongs to the DTD family. As to quaternary structure, homodimer.

Its subcellular location is the cytoplasm. The catalysed reaction is glycyl-tRNA(Ala) + H2O = tRNA(Ala) + glycine + H(+). It carries out the reaction a D-aminoacyl-tRNA + H2O = a tRNA + a D-alpha-amino acid + H(+). Functionally, an aminoacyl-tRNA editing enzyme that deacylates mischarged D-aminoacyl-tRNAs. Also deacylates mischarged glycyl-tRNA(Ala), protecting cells against glycine mischarging by AlaRS. Acts via tRNA-based rather than protein-based catalysis; rejects L-amino acids rather than detecting D-amino acids in the active site. By recycling D-aminoacyl-tRNA to D-amino acids and free tRNA molecules, this enzyme counteracts the toxicity associated with the formation of D-aminoacyl-tRNA entities in vivo and helps enforce protein L-homochirality. The sequence is that of D-aminoacyl-tRNA deacylase from Legionella pneumophila (strain Paris).